A 226-amino-acid chain; its full sequence is Urease accessory protein UreF (226 aa).

The protein belongs to the UreF family. UreD, UreF and UreG form a complex that acts as a GTP-hydrolysis-dependent molecular chaperone, activating the urease apoprotein by helping to assemble the nickel containing metallocenter of UreC. The UreE protein probably delivers the nickel.

The protein localises to the cytoplasm. Required for maturation of urease via the functional incorporation of the urease nickel metallocenter. The sequence is that of Urease accessory protein UreF from Burkholderia cenocepacia (strain HI2424).